We begin with the raw amino-acid sequence, 282 residues long: Serine/threonine-protein kinase Aurora-2 (282 aa).

The Protein kinase domain maps to 19 to 270; it reads FDIGKPLGRG…LHKLLEHPWI (252 aa). ATP is bound by residues 25–33 and Lys48; that span reads LGRGKFGHV. Residue Asp142 is the Proton acceptor of the active site. Residue Ser164 is modified to Phosphoserine. Residue Thr173 is modified to Phosphothreonine.

It belongs to the protein kinase superfamily. Ser/Thr protein kinase family. Aurora subfamily. In terms of processing, phosphorylation at Thr-173 may regulate activity and degradation of AUR2 in a cell cycle dependent manner. In terms of tissue distribution, abundant in roots, flowers and flower buds, low or absent in expanded leaves, stems and siliques.

It localises to the nucleus membrane. It is found in the cytoplasm. The protein localises to the cytoskeleton. Its subcellular location is the spindle. The protein resides in the spindle pole. The catalysed reaction is L-seryl-[protein] + ATP = O-phospho-L-seryl-[protein] + ADP + H(+). The enzyme catalyses L-threonyl-[protein] + ATP = O-phospho-L-threonyl-[protein] + ADP + H(+). Its function is as follows. Phosphorylates specifically 'Ser-10' of histone H3 in vitro. Associates with cytoskeletal structures that are necessary for cytokinesis and with the microtubule spindle. Might colocalize with gamma-tubulin and function in microtubule organizing centers (MTOCs). The polypeptide is Serine/threonine-protein kinase Aurora-2 (AUR2) (Arabidopsis thaliana (Mouse-ear cress)).